The following is a 262-amino-acid chain: Putative hydro-lyase cu1581 (262 aa).

Belongs to the D-glutamate cyclase family.

The sequence is that of Putative hydro-lyase cu1581 from Corynebacterium urealyticum (strain ATCC 43042 / DSM 7109).